Reading from the N-terminus, the 1706-residue chain is DDT domain-containing protein PTM (1706 aa).

The segment covering 1–16 (MEAKVPRPRGRPRKRQ) has biased composition (basic residues). 2 disordered regions span residues 1–27 (MEAK…KLNN) and 144–168 (VTNS…RGSD). The short motif at 9–18 (RGRPRKRQRL) is the Nuclear localization signal element. Residues 148-160 (EDGDSYSDSESSE) show a composition bias toward acidic residues. Residues 192–252 (EEAVAHLLSV…LRALKGHLER (61 aa)) enclose the DDT domain. The segment covering 375-393 (YKEKEVTDSSTNESKDLDS) has biased composition (basic and acidic residues). The disordered stretch occupies residues 375 to 408 (YKEKEVTDSSTNESKDLDSRCTNGGSNEVSSDLD). Residues 394–408 (RCTNGGSNEVSSDLD) show a composition bias toward polar residues. Residues 411 to 458 (SDECRICGMDGTLLCCDGCPLAYHSRCIGVVKMYIPDGPWFCPECTIN) form a PHD-type 1 zinc finger. 2 disordered regions span residues 1165 to 1194 (KPPS…SVSK) and 1311 to 1345 (TNQK…PATP). Polar residues-rich tracts occupy residues 1167-1194 (PSQQ…SVSK) and 1311-1323 (TNQK…SGLD). Positions 1325–1336 (DSERMSEQKDSK) are enriched in basic and acidic residues. 5 helical membrane-spanning segments follow: residues 1539-1559 (ALGS…SILP), 1569-1589 (LAGP…GLFL), 1596-1616 (ANDL…LGLI), 1624-1644 (AALH…WCGL), and 1682-1702 (MLGL…YVLI).

Interacts (via the DDT domain) with CHR11 (via C-terminus).

The protein resides in the plastid. Its subcellular location is the chloroplast outer membrane. It localises to the nucleus. Functionally, membrane-bound transcription factor required for the plastid-to-nucleus retrograde signaling. Functions in multiple retrograde pathways. The plastid-to-nucleus signal plays an important role in the coordinated expression of both nuclear- and chloroplast-localized genes that encode photosynthesis-related proteins. In the nucleus, activates ABI4 transcription in a PHD-dependent manner associated with histone modifications. Localized primarily in the chloroplast outer membrane as dormant form and, in response to retrograde signals, is released from the membrane through proteolytic cleavage and its cleaved fragment containing the transcription factor domain is redistributed to the nucleus, where it regulates the expression of particular nuclear genes. The polypeptide is DDT domain-containing protein PTM (Arabidopsis thaliana (Mouse-ear cress)).